The primary structure comprises 249 residues: Undecaprenyl-diphosphatase (249 aa).

Transmembrane regions (helical) follow at residues 11–31, 35–55, 80–100, 101–121, 135–155, 175–195, 202–222, and 226–246; these read GLTEFLPISSSGHLAIFTAIF, PDVGYFAFLHLATFLAVLIFV, LVLSTIPAVIVGLCFGDFIES, VFSSTFLIGVFLSITGILMLL, IPYLDAMIVGIFQAFSVLPGI, AVKYSFLMGLPVTFGAGILEL, AEQLFGFVISFLTGLLGLYLV, and VIGGKLKIFGYYCFLASFFVL.

This sequence belongs to the UppP family.

It is found in the cell membrane. The enzyme catalyses di-trans,octa-cis-undecaprenyl diphosphate + H2O = di-trans,octa-cis-undecaprenyl phosphate + phosphate + H(+). In terms of biological role, catalyzes the dephosphorylation of undecaprenyl diphosphate (UPP). The polypeptide is Undecaprenyl-diphosphatase (Methanococcus maripaludis (strain C5 / ATCC BAA-1333)).